Reading from the N-terminus, the 193-residue chain is Phosphatidylglycerophosphatase and protein-tyrosine phosphatase 1 (193 aa).

A mitochondrion-targeting transit peptide spans 1-31 (MAASAWLEAGLARVLFYPTLLYTVFRGRVRG). Residues 37–188 (WYHRIDHTVL…LKEFHKEITA (152 aa)) form the Tyrosine-protein phosphatase domain. N6-succinyllysine is present on Lys85. Cys132 acts as the Phosphocysteine intermediate in catalysis.

The protein belongs to the protein-tyrosine phosphatase family. Non-receptor class dual specificity subfamily. Interacts with STYXL1; the interaction inhibits PTPMT1 catalytic activity. As to expression, predominantly expressed in testis. Expressed at lower level in heart, brain, spleen, lung, liver, skeletal muscle, kidney, bone marrow, eye, lymph node, smooth muscle, prostate, thymus, stomach and uterus.

It is found in the mitochondrion inner membrane. It carries out the reaction a 1,2-diacyl-sn-glycero-3-phospho-(1'-sn-glycero-3'-phosphate) + H2O = a 1,2-diacyl-sn-glycero-3-phospho-(1'-sn-glycerol) + phosphate. It catalyses the reaction O-phospho-L-tyrosyl-[protein] + H2O = L-tyrosyl-[protein] + phosphate. The enzyme catalyses O-phospho-L-seryl-[protein] + H2O = L-seryl-[protein] + phosphate. The catalysed reaction is O-phospho-L-threonyl-[protein] + H2O = L-threonyl-[protein] + phosphate. It carries out the reaction 1,2-di-(9Z-octadecenoyl)-sn-glycero-3-phospho-(1'-sn-glycerol-3'-phosphate) + H2O = 1,2-di-(9Z-octadecenoyl)-sn-glycero-3-phospho-(1'-sn-glycerol) + phosphate. It catalyses the reaction 1,2-dioctanoyl-sn-glycero-3-phospho-(1D-myo-inositol-5-phosphate) + H2O = 1,2-dioctanoyl-sn-glycero-3-phospho-(1D-myo-inositol) + phosphate. The enzyme catalyses a 1-acyl-2-hexanoyl-sn-glycero-3-phospho-(1D-myo-inositol-5-phosphate) + H2O = a 1-acyl-2-hexanoyl-sn-glycero-3-phospho-(1D-myo-inositol) + phosphate. The catalysed reaction is 1,2-dibutyryl-sn-glycero-3-phospho-(1D-myo-inositol-5-phosphate) + H2O = 1,2-dibutyryl-sn-glycero-3-phospho-(1D-myo-inositol) + phosphate. Its pathway is phospholipid metabolism; phosphatidylglycerol biosynthesis; phosphatidylglycerol from CDP-diacylglycerol: step 2/2. Its function is as follows. Lipid phosphatase which dephosphorylates phosphatidylglycerophosphate (PGP) to phosphatidylglycerol (PG). PGP is an essential intermediate in the biosynthetic pathway of cardiolipin, a mitochondrial-specific phospholipid regulating the membrane integrity and activities of the organelle. Has also been shown to display phosphatase activity toward phosphoprotein substrates, specifically mediates dephosphorylation of mitochondrial proteins, thereby playing an essential role in ATP production. Has probably a preference for proteins phosphorylated on Ser and/or Thr residues compared to proteins phosphorylated on Tyr residues. Probably involved in regulation of insulin secretion in pancreatic beta cells. May prevent intrinsic apoptosis, probably by regulating mitochondrial membrane integrity. The polypeptide is Phosphatidylglycerophosphatase and protein-tyrosine phosphatase 1 (Mus musculus (Mouse)).